Reading from the N-terminus, the 511-residue chain is Rab proteins geranylgeranyltransferase component A (511 aa).

Belongs to the Rab GDI family.

It localises to the cytoplasm. It is found in the perinuclear region. The protein localises to the cytoskeleton. Its subcellular location is the spindle pole. Binds unprenylated Rab proteins, presents it to the catalytic component B, and remains bound to it after the geranylgeranyl transfer reaction. The component A is thought to be regenerated by transferring its prenylated Rab to a protein acceptor. In Drosophila melanogaster (Fruit fly), this protein is Rab proteins geranylgeranyltransferase component A.